The chain runs to 246 residues: Transmembrane and ubiquitin-like domain-containing protein 1 (246 aa).

Residues 2–30 (TLIEGVGDEVTVLFSVLACLLVLALAWVS) form a required to release iHOPS from membranes region. The helical transmembrane segment at 11–31 (VTVLFSVLACLLVLALAWVST) threads the bilayer. The disordered stretch occupies residues 34–101 (AEGGDPLPQP…TPPAPDSPQE (68 aa)). Over residues 40 to 50 (LPQPSGTPTPS) the composition is skewed to pro residues. T71 carries the post-translational modification Phosphothreonine. S73 is subject to Phosphoserine. Position 92 is a phosphothreonine (T92). 2 positions are modified to phosphoserine: S98 and S127. In terms of domain architecture, Ubiquitin-like spans 103 to 176 (LVLRLKFLND…LHCHVSTRVG (74 aa)). Helical transmembrane passes span 195-215 (IGSL…YCQI) and 221-241 (FPLT…LLAF).

As to quaternary structure, interacts with EEF1A1, GRIA2, GRIP1, CAMLG, TUBG1. Interacts with NPM1 and CDKN2A; TMUB1 can enhance interaction between NPM1 and CDKN2A and is proposed to bridge the proteins; proposed to be mediated by iHOPS. Interacts with ERLIN2 and AMFR; TMUB1 promotes the interaction of ERLIN2 with AMFR. Post-translationally, processed by regulated intramembrane proteolysis (RIP)in the N-terminus to release iHOPS from membranes. In terms of tissue distribution, ubiquitously expressed with highest levels in mammary and thyroid glands, bone marrow and spleen; limited expression in cardiac, pancreatic and ovarian tissues.

It localises to the membrane. Its subcellular location is the postsynaptic cell membrane. The protein resides in the recycling endosome. The protein localises to the cytoplasm. It is found in the nucleus. It localises to the nucleolus. Its subcellular location is the cytoskeleton. The protein resides in the microtubule organizing center. The protein localises to the centrosome. Functionally, involved in sterol-regulated ubiquitination and degradation of HMG-CoA reductase HMGCR. Involved in positive regulation of AMPA-selective glutamate receptor GRIA2 recycling to the cell surface. Acts as a negative regulator of hepatocyte growth during regeneration. Its function is as follows. May contribute to the regulation of translation during cell-cycle progression. May contribute to the regulation of cell proliferation. May be involved in centrosome assembly. Modulates stabilization and nucleolar localization of tumor suppressor CDKN2A and enhances association between CDKN2A and NPM1. This chain is Transmembrane and ubiquitin-like domain-containing protein 1 (TMUB1), found in Homo sapiens (Human).